A 392-amino-acid polypeptide reads, in one-letter code: 8-amino-7-oxononanoate synthase (392 aa).

Arg19 contacts substrate. Residue 106–107 (GY) participates in pyridoxal 5'-phosphate binding. Residue His131 coordinates substrate. Pyridoxal 5'-phosphate is bound by residues Ser176, His204, and Thr233. An N6-(pyridoxal phosphate)lysine modification is found at Lys236. Thr350 is a substrate binding site.

Belongs to the class-II pyridoxal-phosphate-dependent aminotransferase family. BioF subfamily. Homodimer. Pyridoxal 5'-phosphate serves as cofactor.

It carries out the reaction 6-carboxyhexanoyl-[ACP] + L-alanine + H(+) = (8S)-8-amino-7-oxononanoate + holo-[ACP] + CO2. It participates in cofactor biosynthesis; biotin biosynthesis. Its function is as follows. Catalyzes the decarboxylative condensation of pimeloyl-[acyl-carrier protein] and L-alanine to produce 8-amino-7-oxononanoate (AON), [acyl-carrier protein], and carbon dioxide. The sequence is that of 8-amino-7-oxononanoate synthase from Stutzerimonas stutzeri (strain A1501) (Pseudomonas stutzeri).